The following is a 160-amino-acid chain: Epithelial membrane protein 1 (160 aa).

The helical transmembrane segment at 1–21 threads the bilayer; that stretch reads MLVLLAGLFVVHIATAIMLFV. N-linked (GlcNAc...) asparagine glycans are attached at residues asparagine 35 and asparagine 43. 2 consecutive transmembrane segments (helical) span residues 67-87 and 95-115; these read FMILSIIFSIISLVVFVFQLF and FFLSGSTMLVCWLCILVGVSI. The N-linked (GlcNAc...) asparagine glycan is linked to asparagine 128. Residues 137 to 157 traverse the membrane as a helical segment; that stretch reads FILTWICFCFSFIIGILYMVL.

Belongs to the PMP-22/EMP/MP20 family.

It is found in the membrane. The sequence is that of Epithelial membrane protein 1 (Emp1) from Mus musculus (Mouse).